We begin with the raw amino-acid sequence, 1272 residues long: MPAERKKPASMEEKDSLPNNKEKDCSERRTVSSKERPKDDIKLTAKKEVSKAPEDKKKRLEDDKRKKEDKERKKKDEEKVKAEEESKKKEEEEKKKHQEEERKKQEEQAKRQQEEEAAAQMKEKEESIQLHQEAWERHHLRKELRSKNQNAPDSRPEENFFSRLDSSLKKNTAFVKKLKTITEQQRDSLSHDFNGLNLSKYIAEAVASIVEAKLKISDVNCAVHLCSLFHQRYADFAPSLLQVWKKHFEARKEEKTPNITKLRTDLRFIAELTIVGIFTDKEGLSLIYEQLKNIINADRESHTHVSVVISFCRHCGDDIAGLVPRKVKSAAEKFNLSFPPSEIISPEKQQPFQNLLKEYFTSLTKHLKRDHRELQNTERQNRRILHSKGELSEDRHKQYEEFAMSYQKLLANSQSLADLLDENMPDLPQDKPTPEEHGPGIDIFTPGKPGEYDLEGGIWEDEDARNFYENLIDLKAFVPAILFKDNEKSCQNKESNKDDTKEAKESKENKEVSSPDDLELELENLEINDDTLELEGGDEAEDLTKKLLDEQEQEDEEASTGSHLKLIVDAFLQQLPNCVNRDLIDKAAMDFCMNMNTKANRKKLVRALFIVPRQRLDLLPFYARLVATLHPCMSDVAEDLCSMLRGDFRFHVRKKDQINIETKNKTVRFIGELTKFKMFTKNDTLHCLKMLLSDFSHHHIEMACTLLETCGRFLFRSPESHLRTSVLLEQMMRKKQAMHLDARYVTMVENAYYYCNPPPAEKTVKKKRPPLQEYVRKLLYKDLSKVTTEKVLRQMRKLPWQDQEVKDYVICCMINIWNVKYNSIHCVANLLAGLVLYQEDVGIHVVDGVLEDIRLGMEVNQPKFNQRRISSAKFLGELYNYRMVESAVIFRTLYSFTSFGVNPDGSPSSLDPPEHLFRIRLVCTILDTCGQYFDRGSSKRKLDCFLVYFQRYVWWKKSLEVWTKDHPFPIDIDYMISDTLELLRPKIKLCNSLEESIRQVQDLEREFLIKLGLVNDKDSKDSMTEGENLEEDEEEEEGGAETEEQSGNESEVNEPEEEEGSDNDDDEGEEEEEENTDYLTDSNKENETDEENTEVMIKGGGLKHVPCVEDEDFIQALDKMMLENLQQRSGESVKVHQLDVAIPLHLKSQLRKGPPLGGGEGEAESADTMPFVMLTRKGNKQQFKILNVPMSSQLAANHWNQQQAEQEERMRMKKLTLDINERQEQEDYQEMLQSLAQRPAPANTNRERRPRYQHPKGAPNADLIFKTGGRRR.

Basic and acidic residues predominate over residues 1–114; sequence MPAERKKPAS…QEEQAKRQQE (114 aa). Disordered stretches follow at residues 1-126, 370-389, 423-445, and 490-517; these read MPAE…EKEE, DHRE…HSKG, NMPD…DIFT, and CQNK…SPDD. A coiled-coil region spans residues 54–134; it reads EDKKKRLEDD…EESIQLHQEA (81 aa). The interval 94-133 is sufficient for interaction with UPF1; it reads KKKHQEEERKKQEEQAKRQQEEEAAAQMKEKEESIQLHQE. The 264-residue stretch at 168 to 431 folds into the MIF4G 1 domain; sequence LKKNTAFVKK…ENMPDLPQDK (264 aa). 2 stretches are compositionally biased toward basic and acidic residues: residues 428–439 and 490–513; these read PQDKPTPEEHGP and CQNK…KEVS. A coiled-coil region spans residues 487–559; it reads EKSCQNKESN…EQEQEDEEAS (73 aa). 2 consecutive MIF4G domains span residues 569–758 and 773–986; these read DAFL…CNPP and EYVR…LRPK. Residues 711–928 form a sufficient for interaction with UPF3A and UPF3B region; sequence GRFLFRSPES…IRLVCTILDT (218 aa). The segment at 757 to 1272 is sufficient for interaction with EIF4A1 and EIF1; sequence PPPAEKTVKK…LIFKTGGRRR (516 aa). Residues 839–859 form a binds to UPF3B region; the sequence is EDVGIHVVDGVLEDIRLGMEV. The interval 1018–1098 is disordered; that stretch reads DSKDSMTEGE…DEENTEVMIK (81 aa). A compositionally biased stretch (acidic residues) spans 1027 to 1076; that stretch reads ENLEEDEEEEEGGAETEEQSGNESEVNEPEEEEGSDNDDDEGEEEEEENT. The sufficient for interaction with UPF1 C-terminus stretch occupies residues 1084-1272; that stretch reads KENETDEENT…LIFKTGGRRR (189 aa). Thr-1088 is subject to Phosphothreonine. 2 interaction with UPF1 regions span residues 1105-1129 and 1167-1207; these read VPCV…QQRS and DTMP…AEQE. A necessary for interaction with UPF1 region spans residues 1105 to 1198; it reads VPCVEDEDFI…PMSSQLAANH (94 aa). The tract at residues 1220–1272 is disordered; sequence NERQEQEDYQEMLQSLAQRPAPANTNRERRPRYQHPKGAPNADLIFKTGGRRR.

In terms of assembly, found in a post-splicing messenger ribonucleoprotein (mRNP) complex. Associates with the exon junction complex (EJC). Interacts with SMG1, EST1A, UPF1, UPF3A, UPF3B, EIF4A1 and EIF1. In terms of tissue distribution, ubiquitous.

The protein resides in the cytoplasm. The protein localises to the perinuclear region. Involved in nonsense-mediated decay (NMD) of mRNAs containing premature stop codons by associating with the nuclear exon junction complex (EJC). Recruited by UPF3B associated with the EJC core at the cytoplasmic side of the nuclear envelope and the subsequent formation of an UPF1-UPF2-UPF3 surveillance complex (including UPF1 bound to release factors at the stalled ribosome) is believed to activate NMD. In cooperation with UPF3B stimulates both ATPase and RNA helicase activities of UPF1. Binds spliced mRNA. The sequence is that of Regulator of nonsense transcripts 2 from Homo sapiens (Human).